The sequence spans 161 residues: MAKFPITDQGFEKLEHELKHLKHVERKKVSEDIAEARAHGDLSENAEYEAAREKQAFVEARIKHLEDITARAEIINVAKLSGDSIKFGATVVLIDDETEEEVMYHIVGEYEADITKKRVSIASPIAKALIGKSVGDIVEVMTPGGVKSYEVVTIKYEELVF.

A coiled-coil region spans residues Ser43–Ile68.

Belongs to the GreA/GreB family.

Necessary for efficient RNA polymerase transcription elongation past template-encoded arresting sites. The arresting sites in DNA have the property of trapping a certain fraction of elongating RNA polymerases that pass through, resulting in locked ternary complexes. Cleavage of the nascent transcript by cleavage factors such as GreA or GreB allows the resumption of elongation from the new 3'terminus. GreA releases sequences of 2 to 3 nucleotides. The polypeptide is Transcription elongation factor GreA (Rickettsia bellii (strain OSU 85-389)).